A 507-amino-acid polypeptide reads, in one-letter code: ATP synthase subunit alpha, chloroplastic (507 aa).

An ATP-binding site is contributed by 170–177; the sequence is GDRQTGKT.

It belongs to the ATPase alpha/beta chains family. As to quaternary structure, F-type ATPases have 2 components, CF(1) - the catalytic core - and CF(0) - the membrane proton channel. CF(1) has five subunits: alpha(3), beta(3), gamma(1), delta(1), epsilon(1). CF(0) has four main subunits: a, b, b' and c.

The protein resides in the plastid. The protein localises to the chloroplast thylakoid membrane. It catalyses the reaction ATP + H2O + 4 H(+)(in) = ADP + phosphate + 5 H(+)(out). Its function is as follows. Produces ATP from ADP in the presence of a proton gradient across the membrane. The alpha chain is a regulatory subunit. This Drimys granadensis protein is ATP synthase subunit alpha, chloroplastic.